Reading from the N-terminus, the 100-residue chain is C-X-C motif chemokine 2 (100 aa).

An N-terminal signal peptide occupies residues 1 to 31 (MAPPTRQLLNAVLVLLLLLATNHQGTGVVVA). 2 disulfide bridges follow: Cys36/Cys62 and Cys38/Cys78.

This sequence belongs to the intercrine alpha (chemokine CxC) family. Homotetramer. At least expressed in the lung and trachea.

The protein localises to the secreted. Functionally, chemotactic for human polymorphonuclear leukocytes but does not induce chemokinesis or an oxidative burst. Contributes to neutrophil activation during inflammation. This chain is C-X-C motif chemokine 2 (Cxcl2), found in Rattus norvegicus (Rat).